The chain runs to 438 residues: MRRRTATRRPAKKAPLGPMQTYLVEGLTHEAKGVARLNGKVTFIEGALPGETVTAQVNKPGRRFDEAVLNAVIETSVDRVSPACQHFGDCGGCSFQHLEESAQRLAKADWLAGQLRNLLSKEQIECLFDVGSGYRRRARIAIDHKKNALVLGFRSKASNRVVDVEQCHVLTPSLQTLFVSLKVCLKQHPILSSLGHIELLEDTKGLSVVLRLVSNITPVQQQAYLDWAQQQDVELYWQAPKASRADLTDEQMRYYDVSNLRLKYHPQDFIQINEFMNQKMVAQAMAWLAPQKDDTVLDLFCGVGNFSLPLAQLAGSVIGVELQESMVQAGRHNASLNGLKNLSFVAADLTQPVAGQFSAENINKILLDPPRAGAFEFLDTIIHIAPQQILYVSCNASTLARDAEYLVLNGYKVVRAGLMDMFPQTSHVETMMLLQKQK.

The TRAM domain maps to 13 to 71; it reads KAPLGPMQTYLVEGLTHEAKGVARLNGKVTFIEGALPGETVTAQVNKPGRRFDEAVLNA. Residues Cys84, Cys90, Cys93, and Cys167 each contribute to the [4Fe-4S] cluster site. S-adenosyl-L-methionine contacts are provided by Gln271, Phe300, Asn305, Glu321, Asp348, and Asp368. The Nucleophile role is filled by Cys394.

This sequence belongs to the class I-like SAM-binding methyltransferase superfamily. RNA M5U methyltransferase family. RlmD subfamily.

It carries out the reaction uridine(1939) in 23S rRNA + S-adenosyl-L-methionine = 5-methyluridine(1939) in 23S rRNA + S-adenosyl-L-homocysteine + H(+). Its function is as follows. Catalyzes the formation of 5-methyl-uridine at position 1939 (m5U1939) in 23S rRNA. The chain is 23S rRNA (uracil(1939)-C(5))-methyltransferase RlmD from Marinomonas posidonica (strain CECT 7376 / NCIMB 14433 / IVIA-Po-181).